The following is a 491-amino-acid chain: Nicotinamide phosphoribosyltransferase (491 aa).

An N-acetylmethionine modification is found at M1. Y188 carries the phosphotyrosine modification. R196 contacts diphosphate. D219 contributes to the beta-nicotinamide D-ribonucleotide binding site. H247 and R311 together coordinate diphosphate. Residues 311 to 313 (RPD), 353 to 354 (GD), G384, and R392 each bind beta-nicotinamide D-ribonucleotide. S472 bears the Phosphoserine mark.

The protein belongs to the NAPRTase family. As to quaternary structure, homodimer. Ubiquitously expressed in lymphoid and non-lymphoid tissues.

The protein resides in the nucleus. The protein localises to the cytoplasm. Its subcellular location is the secreted. The catalysed reaction is beta-nicotinamide D-ribonucleotide + diphosphate = 5-phospho-alpha-D-ribose 1-diphosphate + nicotinamide + H(+). Its pathway is cofactor biosynthesis; NAD(+) biosynthesis; nicotinamide D-ribonucleotide from 5-phospho-alpha-D-ribose 1-diphosphate and nicotinamide: step 1/1. In terms of biological role, the secreted form behaves both as a cytokine with immunomodulating properties and an adipokine with anti-diabetic properties, it has no enzymatic activity, partly because of lack of activation by ATP, which has a low level in extracellular space and plasma. Catalyzes the condensation of nicotinamide with 5-phosphoribosyl-1-pyrophosphate to yield nicotinamide mononucleotide, an intermediate in the biosynthesis of NAD. It is the rate limiting component in the mammalian NAD biosynthesis pathway. Plays a role in the modulation of circadian clock function. NAMPT-dependent oscillatory production of NAD regulates oscillation of clock target gene expression by releasing the core clock component: CLOCK-BMAL1 heterodimer from NAD-dependent SIRT1-mediated suppression. The sequence is that of Nicotinamide phosphoribosyltransferase (Nampt) from Mus musculus (Mouse).